We begin with the raw amino-acid sequence, 568 residues long: Proline--tRNA ligase (568 aa).

The protein belongs to the class-II aminoacyl-tRNA synthetase family. ProS type 1 subfamily. As to quaternary structure, homodimer.

Its subcellular location is the cytoplasm. It carries out the reaction tRNA(Pro) + L-proline + ATP = L-prolyl-tRNA(Pro) + AMP + diphosphate. In terms of biological role, catalyzes the attachment of proline to tRNA(Pro) in a two-step reaction: proline is first activated by ATP to form Pro-AMP and then transferred to the acceptor end of tRNA(Pro). As ProRS can inadvertently accommodate and process non-cognate amino acids such as alanine and cysteine, to avoid such errors it has two additional distinct editing activities against alanine. One activity is designated as 'pretransfer' editing and involves the tRNA(Pro)-independent hydrolysis of activated Ala-AMP. The other activity is designated 'posttransfer' editing and involves deacylation of mischarged Ala-tRNA(Pro). The misacylated Cys-tRNA(Pro) is not edited by ProRS. The sequence is that of Proline--tRNA ligase from Alkalilimnicola ehrlichii (strain ATCC BAA-1101 / DSM 17681 / MLHE-1).